The primary structure comprises 282 residues: Putative SWIB domain-containing protein 070L (282 aa).

Residues 1 to 16 are compositionally biased toward low complexity; it reads MFQTTPKQVKPTTVPK. The disordered stretch occupies residues 1–21; sequence MFQTTPKQVKPTTVPKTGRKN. Residues 97–181 form the SWIB/MDM2 domain; that stretch reads GLEKPRMISE…QKYLKHCFDE (85 aa). A disordered region spans residues 199–282; sequence TDDQTTAEEA…KVKKEHKIKK (84 aa). The span at 262–275 shows a compositional bias: basic and acidic residues; sequence GKKDKENIPLEKVK.

This sequence belongs to the IIV-6 306R family.

In Invertebrate iridescent virus 3 (IIV-3), this protein is Putative SWIB domain-containing protein 070L.